The following is a 181-amino-acid chain: S-fimbrial protein subunit SfaA (181 aa).

The first 24 residues, 1-24 (MKLKFISMAVFSALTLGVATNASA), serve as a signal peptide directing secretion. A disulfide bridge connects residues C44 and C84.

This sequence belongs to the fimbrial protein family.

It is found in the fimbrium. Fimbriae (also called pili), polar filaments radiating from the surface of the bacterium to a length of 0.5-1.5 micrometers and numbering 100-300 per cell, enable bacteria to colonize the epithelium of specific host organs. Its function is as follows. The major fimbrial subunit. Interacts with alpha-sialic acid-(2-3)-beta-Gal containing receptors. It belongs to the group of Mrh (Mannose-resistant hemagglutination) fimbrial proteins. This chain is S-fimbrial protein subunit SfaA (sfaA), found in Escherichia coli O6:K15:H31 (strain 536 / UPEC).